The sequence spans 247 residues: Complement C1q subcomponent subunit B (247 aa).

A signal peptide spans Met-1 to Ala-22. The residue at position 23 (Gln-23) is a Pyrrolidone carboxylic acid. 4-hydroxyproline occurs at positions 29, 32, 35, 47, and 50. Residues Ser-30–Gly-78 are disordered. The Collagen-like domain occupies Gly-39–Pro-98. A compositionally biased stretch (low complexity) spans Lys-40 to Thr-52. Residues Lys-53 and Lys-56 each carry the 5-hydroxylysine modification. 4-hydroxyproline is present on Pro-59. The residue at position 71 (Lys-71) is a 5-hydroxylysine. 2 positions are modified to 4-hydroxyproline: Pro-77 and Pro-80. 2 positions are modified to 5-hydroxylysine: Lys-86 and Lys-92. Residues Pro-95 and Pro-98 each carry the 4-hydroxyproline modification. Residue Lys-104 is modified to 5-hydroxylysine. Residues Lys-111–Ala-247 form the C1q domain. A disulfide bond links Cys-175 and Cys-192. Residues Asp-193, Tyr-194, and Gln-200 each contribute to the Ca(2+) site.

In terms of assembly, core component of the complement C1 complex, a calcium-dependent complex composed of 1 molecule of the C1Q subcomplex, 2 molecules of C1R and 2 molecules of C1S. The C1Q subcomplex is composed 18 subunits: 3 chains of C1QA, C1QB, and C1QC trimerize to form 6 collagen-like triple helices connected to six globular ligand-recognition modules (C1q domain). Hydroxylated on lysine and proline residues. Hydroxylated lysine residues can be glycosylated. Bovine C1Q contains up to 66.3 hydroxylysine-galactosylglucose residues. Total percentage hydroxylysine residues glycosylated is 92.0%. Contains no hydroxylysine-monosaccharides.

It localises to the secreted. It is found in the cell surface. Its activity is regulated as follows. The C1Q subcomplex is inhibited by sulfated molecules, such as triterpenoid sulfates, heparan sulfate, or chondroitin sulfates. In terms of biological role, core component of the complement C1 complex, a multiprotein complex that initiates the classical pathway of the complement system, a cascade of proteins that leads to phagocytosis and breakdown of pathogens and signaling that strengthens the adaptive immune system. The classical complement pathway is initiated by the C1Q subcomplex of the C1 complex, which specifically binds IgG or IgM immunoglobulins complexed with antigens, forming antigen-antibody complexes on the surface of pathogens: C1QA, together with C1QB and C1QC, specifically recognizes and binds the Fc regions of IgG or IgM via its C1q domain. Immunoglobulin-binding activates the proenzyme C1R, which cleaves C1S, initiating the proteolytic cascade of the complement system. The C1Q subcomplex is activated by a hexamer of IgG complexed with antigens, while it is activated by a pentameric IgM. The C1Q subcomplex also recognizes and binds phosphatidylserine exposed on the surface of cells undergoing programmed cell death, possibly promoting activation of the complement system. The protein is Complement C1q subcomponent subunit B (C1QB) of Bos taurus (Bovine).